A 795-amino-acid polypeptide reads, in one-letter code: Phenylalanine--tRNA ligase beta subunit (795 aa).

The region spanning 39 to 148 (AGSFHGVVVG…ADAPIGTDIR (110 aa)) is the tRNA-binding domain. The B5 domain occupies 401-476 (PKRATITLRR…RVYGYNNIPD (76 aa)). Mg(2+)-binding residues include Asp454, Asp460, Glu463, and Glu464. In terms of domain architecture, FDX-ACB spans 701–794 (SRFPANRRDI…LKERFQASLR (94 aa)).

It belongs to the phenylalanyl-tRNA synthetase beta subunit family. Type 1 subfamily. As to quaternary structure, tetramer of two alpha and two beta subunits. It depends on Mg(2+) as a cofactor.

The protein localises to the cytoplasm. It carries out the reaction tRNA(Phe) + L-phenylalanine + ATP = L-phenylalanyl-tRNA(Phe) + AMP + diphosphate + H(+). The sequence is that of Phenylalanine--tRNA ligase beta subunit from Shigella boydii serotype 4 (strain Sb227).